The chain runs to 251 residues: NADH-quinone oxidoreductase subunit C (251 aa).

Residues 1–34 (MSDANNTAGDANEVNPEKDLSAENLPGQRGQGGE) form a disordered region.

The protein belongs to the complex I 30 kDa subunit family. NDH-1 is composed of 14 different subunits. Subunits NuoB, C, D, E, F, and G constitute the peripheral sector of the complex.

It is found in the cell membrane. The enzyme catalyses a quinone + NADH + 5 H(+)(in) = a quinol + NAD(+) + 4 H(+)(out). In terms of biological role, NDH-1 shuttles electrons from NADH, via FMN and iron-sulfur (Fe-S) centers, to quinones in the respiratory chain. The immediate electron acceptor for the enzyme in this species is believed to be a menaquinone. Couples the redox reaction to proton translocation (for every two electrons transferred, four hydrogen ions are translocated across the cytoplasmic membrane), and thus conserves the redox energy in a proton gradient. The protein is NADH-quinone oxidoreductase subunit C of Streptomyces coelicolor (strain ATCC BAA-471 / A3(2) / M145).